Here is a 220-residue protein sequence, read N- to C-terminus: Large ribosomal subunit protein uL1 (220 aa).

The protein belongs to the universal ribosomal protein uL1 family. In terms of assembly, part of the 50S ribosomal subunit.

Binds directly to 23S rRNA. The L1 stalk is quite mobile in the ribosome, and is involved in E site tRNA release. Its function is as follows. Protein L1 is also a translational repressor protein, it controls the translation of the L11 operon by binding to its mRNA. The protein is Large ribosomal subunit protein uL1 of Ehrlichia ruminantium (strain Gardel).